The sequence spans 143 residues: Transcriptional regulator MraZ (143 aa).

SpoVT-AbrB domains lie at Glu-5–Glu-47 and Ala-76–Glu-119.

The protein belongs to the MraZ family. As to quaternary structure, forms oligomers.

The protein resides in the cytoplasm. Its subcellular location is the nucleoid. This chain is Transcriptional regulator MraZ, found in Listeria welshimeri serovar 6b (strain ATCC 35897 / DSM 20650 / CCUG 15529 / CIP 8149 / NCTC 11857 / SLCC 5334 / V8).